A 399-amino-acid chain; its full sequence is Mitochondrial glycine transporter (399 aa).

3 Solcar repeats span residues 35-137 (IPPY…LRSV), 164-251 (LSTT…CKTN), and 266-374 (GNWM…GRSW). The next 6 helical transmembrane spans lie at 41-66 (LAFG…TRLQ), 112-138 (GTAP…RSVA), 170-195 (LLTG…ARFE), 226-249 (GFTA…EACK), 270-296 (VVSA…KTRM), and 349-367 (GLGL…GWSI). A disordered region spans residues 379–399 (EASSSAQEAGTGTRLLDHKQV).

The protein belongs to the mitochondrial carrier (TC 2.A.29) family. SLC25A38 subfamily.

The protein resides in the mitochondrion inner membrane. It carries out the reaction glycine(in) = glycine(out). Mitochondrial glycine transporter that imports glycine into the mitochondrial matrix. Plays an important role in providing glycine for the first enzymatic step in heme biosynthesis, the condensation of glycine with succinyl-CoA to produce 5-aminolevulinate (ALA) in the mitochondrial matrix. In Mycosarcoma maydis (Corn smut fungus), this protein is Mitochondrial glycine transporter.